Here is a 545-residue protein sequence, read N- to C-terminus: Threonine--tRNA ligase catalytic subunit (545 aa).

A catalytic region spans residues D139–P433. Zn(2+) is bound by residues C231, H282, and H410.

It belongs to the class-II aminoacyl-tRNA synthetase family. As to quaternary structure, homodimer. Probably interacts with its editing subunit. Requires Zn(2+) as cofactor.

It localises to the cytoplasm. The catalysed reaction is tRNA(Thr) + L-threonine + ATP = L-threonyl-tRNA(Thr) + AMP + diphosphate + H(+). In terms of biological role, catalyzes the attachment of threonine to tRNA(Thr) in a two-step reaction: L-threonine is first activated by ATP to form Thr-AMP and then transferred to the acceptor end of tRNA(Thr). Also activates L-serine and transfers it to tRNA(Thr) but cannot deacylate incorrectly charged amino acid; unlike most archaea the editing function is found in a freestanding protein. The chain is Threonine--tRNA ligase catalytic subunit from Saccharolobus islandicus (strain M.16.4 / Kamchatka #3) (Sulfolobus islandicus).